The primary structure comprises 491 residues: E3 ubiquitin-protein ligase Hakai (491 aa).

Positions 1–61 (MDHTDNELQG…PAKAPPGDEE (61 aa)) are disordered. An RING-type zinc finger spans residues 109–149 (CDKCGLPIKIYGRMIPCKHVFCYDCAILHEKKGDKMCPGCS). An HYB domain region spans residues 148–206 (CSDPVQRIEQCTRGSLFMCSIVQGCKRTYLSQRDLQAHINHRHMRAGKPVTRASLENVH). The segment at 164–190 (FMCSIVQGCKRTYLSQRDLQAHINHRH) adopts a C2H2-type zinc-finger fold. Phosphoserine is present on residues Ser-201, Ser-285, and Ser-290. Residues 255 to 491 (QPHEDIRAPP…DQTRYRPYYQ (237 aa)) are disordered. Composition is skewed to pro residues over residues 342 to 359 (APPP…PHPP), 372 to 389 (APPP…PPPG), and 399 to 423 (MNHP…PPHH). A compositionally biased stretch (polar residues) spans 427-442 (NSLPQFTEDQGTLSPP). A compositionally biased stretch (pro residues) spans 457–478 (PRGPPPPPRLQGPPSQTPLPGP).

This sequence belongs to the Hakai family. Homodimer. Interacts with tyrosine-phosphorylated SRC substrates. Component of the WMM complex, a N6-methyltransferase complex composed of a catalytic subcomplex, named MAC, and of an associated subcomplex, named MACOM. The MAC subcomplex is composed of METTL3 and METTL14. The MACOM subcomplex is composed of WTAP, ZC3H13, CBLL1/HAKAI, VIRMA, and, in some cases of RBM15 (RBM15 or RBM15B). Also a component of a MACOM-like complex, named WTAP complex, composed of WTAP, ZC3H13, CBLL1, VIRMA, RBM15, BCLAF1 and THRAP3. Phosphorylated on tyrosine residues.

It is found in the nucleus speckle. The protein resides in the nucleus. It localises to the nucleoplasm. The protein localises to the cytoplasm. It carries out the reaction S-ubiquitinyl-[E2 ubiquitin-conjugating enzyme]-L-cysteine + [acceptor protein]-L-lysine = [E2 ubiquitin-conjugating enzyme]-L-cysteine + N(6)-ubiquitinyl-[acceptor protein]-L-lysine.. Its pathway is protein modification; protein ubiquitination. Functionally, E3 ubiquitin-protein ligase that mediates ubiquitination of several tyrosine-phosphorylated Src substrates, including CDH1, CTTN and DOK1. Targets CDH1 for endocytosis and degradation. Associated component of the WMM complex, a complex that mediates N6-methyladenosine (m6A) methylation of RNAs, a modification that plays a role in the efficiency of mRNA splicing and RNA processing. Its function in the WMM complex is unknown. The polypeptide is E3 ubiquitin-protein ligase Hakai (Homo sapiens (Human)).